Here is a 277-residue protein sequence, read N- to C-terminus: Putative endonuclease (277 aa).

Functionally, putative endonuclease. This Escherichia coli (Enterobacteria phage T5) protein is Putative endonuclease.